Consider the following 782-residue polypeptide: E3 ubiquitin-protein ligase SopA (782 aa).

Residues 140-170 form a disordered region; sequence SANNRPTVSEGRTPPVSPSLSLQATSSPSSP. The span at 157 to 170 shows a compositional bias: low complexity; that stretch reads PSLSLQATSSPSSP. Cysteine 753 acts as the Glycyl thioester intermediate in catalysis.

This sequence belongs to the SopA E3 ligase family. Post-translationally, ubiquitinated in the presence of host E1 ubiquitin-activating enzyme, E2 ubiquitin-conjugating enzyme and ubiquitin.

The protein resides in the secreted. The protein localises to the host cell. It carries out the reaction S-ubiquitinyl-[E2 ubiquitin-conjugating enzyme]-L-cysteine + [acceptor protein]-L-lysine = [E2 ubiquitin-conjugating enzyme]-L-cysteine + N(6)-ubiquitinyl-[acceptor protein]-L-lysine.. Effector proteins function to alter host cell physiology and promote bacterial survival in host tissues. This protein is an E3 ubiquitin ligase that interferes with host's ubiquitination pathway. This is E3 ubiquitin-protein ligase SopA (sopA) from Salmonella agona (strain SL483).